The chain runs to 87 residues: Small ribosomal subunit protein bS18 (87 aa).

It belongs to the bacterial ribosomal protein bS18 family. As to quaternary structure, part of the 30S ribosomal subunit. Forms a tight heterodimer with protein bS6.

Functionally, binds as a heterodimer with protein bS6 to the central domain of the 16S rRNA, where it helps stabilize the platform of the 30S subunit. This chain is Small ribosomal subunit protein bS18, found in Sulfurovum sp. (strain NBC37-1).